The sequence spans 800 residues: Probable replication endonuclease from prophage-like region (800 aa).

Residues tyrosine 503 and tyrosine 507 each act as O-(5'-phospho-DNA)-tyrosine intermediate in the active site.

The protein belongs to the phage GPA family.

Functionally, possible endonuclease which induces a single-strand cut and initiates DNA replication. The protein is Probable replication endonuclease from prophage-like region of Salmonella paratyphi A (strain ATCC 9150 / SARB42).